The following is a 154-amino-acid chain: Endoribonuclease YbeY (154 aa).

Residues histidine 113, histidine 117, and histidine 123 each contribute to the Zn(2+) site.

Belongs to the endoribonuclease YbeY family. Zn(2+) serves as cofactor.

The protein localises to the cytoplasm. Its function is as follows. Single strand-specific metallo-endoribonuclease involved in late-stage 70S ribosome quality control and in maturation of the 3' terminus of the 16S rRNA. This Aeromonas hydrophila subsp. hydrophila (strain ATCC 7966 / DSM 30187 / BCRC 13018 / CCUG 14551 / JCM 1027 / KCTC 2358 / NCIMB 9240 / NCTC 8049) protein is Endoribonuclease YbeY.